Here is a 55-residue protein sequence, read N- to C-terminus: Large ribosomal subunit protein bL33 (55 aa).

The protein belongs to the bacterial ribosomal protein bL33 family.

This Parvibaculum lavamentivorans (strain DS-1 / DSM 13023 / NCIMB 13966) protein is Large ribosomal subunit protein bL33.